The chain runs to 367 residues: UDP-N-acetylglucosamine--N-acetylmuramyl-(pentapeptide) pyrophosphoryl-undecaprenol N-acetylglucosamine transferase (367 aa).

Residues 15–17, asparagine 127, arginine 163, serine 191, isoleucine 249, and glutamine 294 each bind UDP-N-acetyl-alpha-D-glucosamine; that span reads TGG.

This sequence belongs to the glycosyltransferase 28 family. MurG subfamily.

Its subcellular location is the cell inner membrane. The catalysed reaction is di-trans,octa-cis-undecaprenyl diphospho-N-acetyl-alpha-D-muramoyl-L-alanyl-D-glutamyl-meso-2,6-diaminopimeloyl-D-alanyl-D-alanine + UDP-N-acetyl-alpha-D-glucosamine = di-trans,octa-cis-undecaprenyl diphospho-[N-acetyl-alpha-D-glucosaminyl-(1-&gt;4)]-N-acetyl-alpha-D-muramoyl-L-alanyl-D-glutamyl-meso-2,6-diaminopimeloyl-D-alanyl-D-alanine + UDP + H(+). It participates in cell wall biogenesis; peptidoglycan biosynthesis. Functionally, cell wall formation. Catalyzes the transfer of a GlcNAc subunit on undecaprenyl-pyrophosphoryl-MurNAc-pentapeptide (lipid intermediate I) to form undecaprenyl-pyrophosphoryl-MurNAc-(pentapeptide)GlcNAc (lipid intermediate II). This Burkholderia ambifaria (strain MC40-6) protein is UDP-N-acetylglucosamine--N-acetylmuramyl-(pentapeptide) pyrophosphoryl-undecaprenol N-acetylglucosamine transferase.